Consider the following 281-residue polypeptide: Cytosolic Fe-S cluster assembly factor CFD1 (281 aa).

24–31 (GKGGVGKS) provides a ligand contact to ATP. Cysteine 201 and cysteine 204 together coordinate [4Fe-4S] cluster.

The protein belongs to the Mrp/NBP35 ATP-binding proteins family. NUBP2/CFD1 subfamily. Heterotetramer of 2 NBP35 and 2 CFD1 chains. It depends on [4Fe-4S] cluster as a cofactor.

It localises to the cytoplasm. In terms of biological role, component of the cytosolic iron-sulfur (Fe/S) protein assembly (CIA) machinery. Required for maturation of extramitochondrial Fe-S proteins. The NBP35-CFD1 heterotetramer forms a Fe-S scaffold complex, mediating the de novo assembly of an Fe-S cluster and its transfer to target apoproteins. Required for biogenesis and export of both ribosomal subunits, which may reflect a role in assembly of the Fe/S clusters in RLI1, a protein which performs rRNA processing and ribosome export. The sequence is that of Cytosolic Fe-S cluster assembly factor CFD1 from Eremothecium gossypii (strain ATCC 10895 / CBS 109.51 / FGSC 9923 / NRRL Y-1056) (Yeast).